Reading from the N-terminus, the 713-residue chain is Polyribonucleotide nucleotidyltransferase (713 aa).

Positions 487 and 493 each coordinate Mg(2+). The region spanning 554-613 is the KH domain; it reads PRIEVMNIPVDKIREVIGSGGKVIREIVEKTGAKINIEDDGTVKIASASGKEIEAARKWI. Residues 623–691 form the S1 motif domain; that stretch reads GQIYEGTVVK…ERGKVRLSMK (69 aa).

It belongs to the polyribonucleotide nucleotidyltransferase family. Requires Mg(2+) as cofactor.

The protein localises to the cytoplasm. The catalysed reaction is RNA(n+1) + phosphate = RNA(n) + a ribonucleoside 5'-diphosphate. Its function is as follows. Involved in mRNA degradation. Catalyzes the phosphorolysis of single-stranded polyribonucleotides processively in the 3'- to 5'-direction. The protein is Polyribonucleotide nucleotidyltransferase of Agrobacterium fabrum (strain C58 / ATCC 33970) (Agrobacterium tumefaciens (strain C58)).